Reading from the N-terminus, the 217-residue chain is ITG-like peptide (217 aa).

Residues 1 to 21 (MHRTMAVTAVLVLSAAGAAHA) form the signal peptide. The propeptide occupies 22 to 208 (WGGLFNRFSS…REFVQHTAGE (187 aa)).

ITG-like peptide: Expressed in corpora cardiaca (CC), corpora allata (CA), antennal lobe (AL) and gnathal ganglion (GNG) (at protein level). Expression in AL detected in all animals, expression in GNG detected in most animals and in CA and CC detected in few animals (at protein level).

It is found in the secreted. The protein is ITG-like peptide of Agrotis ipsilon (Black cutworm moth).